We begin with the raw amino-acid sequence, 214 residues long: Outer-membrane lipoprotein LolB (214 aa).

Positions 1 to 25 (MNNLKRFTKSIFSCIALSGLLFLGG) are cleaved as a signal peptide. Residue Cys-26 is the site of N-palmitoyl cysteine attachment. Residue Cys-26 is the site of S-diacylglycerol cysteine attachment.

Belongs to the LolB family. In terms of assembly, monomer.

The protein resides in the cell outer membrane. Plays a critical role in the incorporation of lipoproteins in the outer membrane after they are released by the LolA protein. This Shewanella sp. (strain MR-4) protein is Outer-membrane lipoprotein LolB.